Consider the following 432-residue polypeptide: Metacaspase-1 (432 aa).

2 stretches are compositionally biased toward low complexity: residues 1-14 (MYPGSGRYTYNNAG) and 29-59 (QQYGQQYGQQYEQQYGQQYGQQNDQQFSQQY). Residues 1 to 70 (MYPGSGRYTY…PPPGPPPMAY (70 aa)) are disordered. The segment covering 60 to 70 (APPPGPPPMAY) has biased composition (pro residues). Catalysis depends on residues H220 and C276.

This sequence belongs to the peptidase C14B family.

It localises to the cytoplasm. The protein resides in the nucleus. Mediates cell death (apoptosis) triggered by oxygen stress, salt stress or chronological aging. Regulated cell death can prevent a release of toxic cellular components, thus avoiding necrotic collapse of the colony, and can also provide nutrients for healthy cells. Therefore, regulated cell death in yeast colonies can be as important for their development as are apoptosis and related processes that occur within metazoa. This chain is Metacaspase-1 (MCA1), found in Saccharomyces cerevisiae (strain YJM789) (Baker's yeast).